The primary structure comprises 146 residues: D-aminoacyl-tRNA deacylase (146 aa).

The Gly-cisPro motif, important for rejection of L-amino acids signature appears at 137-138; sequence GP.

The protein belongs to the DTD family. As to quaternary structure, homodimer.

The protein resides in the cytoplasm. The enzyme catalyses glycyl-tRNA(Ala) + H2O = tRNA(Ala) + glycine + H(+). The catalysed reaction is a D-aminoacyl-tRNA + H2O = a tRNA + a D-alpha-amino acid + H(+). Functionally, an aminoacyl-tRNA editing enzyme that deacylates mischarged D-aminoacyl-tRNAs. Also deacylates mischarged glycyl-tRNA(Ala), protecting cells against glycine mischarging by AlaRS. Acts via tRNA-based rather than protein-based catalysis; rejects L-amino acids rather than detecting D-amino acids in the active site. By recycling D-aminoacyl-tRNA to D-amino acids and free tRNA molecules, this enzyme counteracts the toxicity associated with the formation of D-aminoacyl-tRNA entities in vivo and helps enforce protein L-homochirality. The chain is D-aminoacyl-tRNA deacylase from Bacillus thuringiensis subsp. konkukian (strain 97-27).